Reading from the N-terminus, the 156-residue chain is Ribonuclease H (156 aa).

An RNase H type-1 domain is found at 2 to 144 (TMKNVQAFTD…CDVLARTQAS (143 aa)). The Mg(2+) site is built by D11, E49, D71, and D136.

This sequence belongs to the RNase H family. Monomer. The cofactor is Mg(2+).

The protein resides in the cytoplasm. The enzyme catalyses Endonucleolytic cleavage to 5'-phosphomonoester.. In terms of biological role, endonuclease that specifically degrades the RNA of RNA-DNA hybrids. This Nitratidesulfovibrio vulgaris (strain DSM 19637 / Miyazaki F) (Desulfovibrio vulgaris) protein is Ribonuclease H.